We begin with the raw amino-acid sequence, 488 residues long: Ribulose bisphosphate carboxylase large chain (488 aa).

Residues N127 and T177 each coordinate substrate. K179 acts as the Proton acceptor in catalysis. Substrate is bound at residue K181. Positions 205, 207, and 208 each coordinate Mg(2+). An N6-carboxylysine modification is found at K205. H297 (proton acceptor) is an active-site residue. The substrate site is built by R298, H330, and S382.

The protein belongs to the RuBisCO large chain family. Type I subfamily. In terms of assembly, heterohexadecamer of 8 large chains and 8 small chains. It depends on Mg(2+) as a cofactor.

It is found in the plastid. The protein resides in the chloroplast. It carries out the reaction 2 (2R)-3-phosphoglycerate + 2 H(+) = D-ribulose 1,5-bisphosphate + CO2 + H2O. The catalysed reaction is D-ribulose 1,5-bisphosphate + O2 = 2-phosphoglycolate + (2R)-3-phosphoglycerate + 2 H(+). Its function is as follows. RuBisCO catalyzes two reactions: the carboxylation of D-ribulose 1,5-bisphosphate, the primary event in carbon dioxide fixation, as well as the oxidative fragmentation of the pentose substrate in the photorespiration process. Both reactions occur simultaneously and in competition at the same active site. The sequence is that of Ribulose bisphosphate carboxylase large chain from Emiliania huxleyi (Coccolithophore).